Consider the following 338-residue polypeptide: MYG1 protein YER156C (338 aa).

Belongs to the MYG1 family.

This chain is MYG1 protein YER156C, found in Saccharomyces cerevisiae (strain ATCC 204508 / S288c) (Baker's yeast).